We begin with the raw amino-acid sequence, 547 residues long: CTP synthase (547 aa).

The interval 1 to 265 is amidoligase domain; the sequence is MARYVFITGG…DQAVLDAFGI (265 aa). Serine 13 provides a ligand contact to CTP. Serine 13 contributes to the UTP binding site. Residues 14–19 and aspartate 71 contribute to the ATP site; that span reads SLGKGL. Mg(2+)-binding residues include aspartate 71 and glutamate 139. Residues 146–148, 186–191, and lysine 222 each bind CTP; these read DIE and KTKPTQ. Residues 186 to 191 and lysine 222 contribute to the UTP site; that span reads KTKPTQ. In terms of domain architecture, Glutamine amidotransferase type-1 spans 291-546; it reads RVAIVGKYTQ…VRAAVEVSRL (256 aa). Glycine 353 provides a ligand contact to L-glutamine. Cysteine 380 functions as the Nucleophile; for glutamine hydrolysis in the catalytic mechanism. L-glutamine contacts are provided by residues 381 to 384, glutamate 404, and arginine 474; that span reads LGMQ. Active-site residues include histidine 519 and glutamate 521.

This sequence belongs to the CTP synthase family. Homotetramer.

The enzyme catalyses UTP + L-glutamine + ATP + H2O = CTP + L-glutamate + ADP + phosphate + 2 H(+). It catalyses the reaction L-glutamine + H2O = L-glutamate + NH4(+). The catalysed reaction is UTP + NH4(+) + ATP = CTP + ADP + phosphate + 2 H(+). It participates in pyrimidine metabolism; CTP biosynthesis via de novo pathway; CTP from UDP: step 2/2. Allosterically activated by GTP, when glutamine is the substrate; GTP has no effect on the reaction when ammonia is the substrate. The allosteric effector GTP functions by stabilizing the protein conformation that binds the tetrahedral intermediate(s) formed during glutamine hydrolysis. Inhibited by the product CTP, via allosteric rather than competitive inhibition. In terms of biological role, catalyzes the ATP-dependent amination of UTP to CTP with either L-glutamine or ammonia as the source of nitrogen. Regulates intracellular CTP levels through interactions with the four ribonucleotide triphosphates. In Cereibacter sphaeroides (strain ATCC 17029 / ATH 2.4.9) (Rhodobacter sphaeroides), this protein is CTP synthase.